A 153-amino-acid chain; its full sequence is Regulatory protein RecX (153 aa).

This sequence belongs to the RecX family.

It localises to the cytoplasm. Its function is as follows. Modulates RecA activity. This is Regulatory protein RecX from Mannheimia succiniciproducens (strain KCTC 0769BP / MBEL55E).